Here is a 332-residue protein sequence, read N- to C-terminus: Cysteine and histidine-rich domain-containing protein 1 (332 aa).

The residue at position 2 (Ala2) is an N-acetylalanine. Residues 2–77 (ALLCYNRGCG…KPPEPVKPEV (76 aa)) are interaction with PPP5C. The Zn(2+) site is built by Cys5, Cys10, Cys24, His27, Cys42, and Cys43. 2 CHORD domains span residues 5-64 (CYNR…KGRH) and 157-216 (CKNG…TGKH). Thr47 carries the post-translational modification Phosphothreonine. A Phosphoserine modification is found at Ser51. Residues Cys59, His64, Cys157, Cys162, Cys176, His179, Cys194, Cys195, Cys211, and His216 each contribute to the Zn(2+) site. The interval 61–82 (KGRHNSEKPPEPVKPEVKTTEK) is disordered. Residues 64 to 82 (HNSEKPPEPVKPEVKTTEK) show a composition bias toward basic and acidic residues. The segment at 65-316 (NSEKPPEPVK…AEPMQWASLE (252 aa)) is interaction with HSP90AA1 and HSP90AB1. Residues 227 to 316 (VVPCRHDWHQ…AEPMQWASLE (90 aa)) form the CS domain.

As to quaternary structure, interacts with HSP90AA1, HSP90AB1, PPP5C, ROCK1 and ROCK2.

Its function is as follows. Regulates centrosome duplication, probably by inhibiting the kinase activity of ROCK2. Proposed to act as co-chaperone for HSP90. May play a role in the regulation of NOD1 via a HSP90 chaperone complex. In vitro, has intrinsic chaperone activity. This function may be achieved by inhibiting association of ROCK2 with NPM1. Plays a role in ensuring the localization of the tyrosine kinase receptor EGFR to the plasma membrane, and thus ensures the subsequent regulation of EGFR activity and EGF-induced actin cytoskeleton remodeling. Involved in stress response. Prevents tumorigenesis. In Sus scrofa (Pig), this protein is Cysteine and histidine-rich domain-containing protein 1 (CHORDC1).